Consider the following 687-residue polypeptide: Chloride channel protein ClC-Kb (687 aa).

The Cytoplasmic segment spans residues M1 to W50. 2 helical membrane-spanning segments follow: residues Y51–Y82 and L91–S111. The segment at residues P116–K127 is an intramembrane region (helical). S121 is a binding site for chloride. Helical transmembrane passes span I141 to T160 and I161 to L180. N-linked (GlcNAc...) asparagine glycosylation occurs at N193. An intramembrane region (helical) is located at residues A203–I224. The chain crosses the membrane as a helical span at residues Y236 to V255. Ca(2+)-binding residues include E259, E261, D278, and E281. 2 consecutive transmembrane segments (helical) span residues I282–L310 and P325–P342. The helical intramembrane region spans A349–T360. The next 2 helical transmembrane spans lie at G400–P420 and I421–F440. F426 serves as a coordination point for chloride. Residues G464–V496 constitute an intramembrane region (helical). Residues P500–Y520 form a helical membrane-spanning segment. Residues D521 to K687 are Cytoplasmic-facing. 2 consecutive CBS domains span residues M551 to S609 and C626 to K687.

Belongs to the chloride channel (TC 2.A.49) family. CLCNKB subfamily. As to quaternary structure, homodimer. Interacts with BSND. N-glycosylated. Expressed predominantly in the kidney. Expressed in all segments of the nephron examined, including the S2 segment and the glomerulus.

Its subcellular location is the basolateral cell membrane. The enzyme catalyses chloride(in) = chloride(out). The catalysed reaction is iodide(out) = iodide(in). It carries out the reaction nitrate(in) = nitrate(out). It catalyses the reaction bromide(in) = bromide(out). Anion-selective channel permeable to small monovalent anions with ion selectivity for chloride &gt; bromide &gt; nitrate &gt; iodide. Forms a homodimeric channel where each subunit has its own ion conduction pathway. May conduct double-barreled currents controlled by two types of gates, two fast gates that control each subunit independently and a slow common gate that opens and shuts off both subunits simultaneously. Assembles with the regulatory subunit BSND/Barttin for sorting at the basolateral plasma membrane domain and functional switch to the ion conducting state. CLCNKB:BSND channels display mostly a linear current-voltage relationship controlled by common gate. Mediates chloride conductance along nephron segments, namely the thick ascending limb of Henle's loop, convoluted tubule and the collecting duct, contributing to the maintenance of systemic acid-base and electrolyte homeostasis. Conducts chloride currents in the stria vascularis of the inner ear to establish the endocochlear potential necessary for normal hearing. The polypeptide is Chloride channel protein ClC-Kb (Rattus norvegicus (Rat)).